The chain runs to 529 residues: BTB/POZ domain-containing protein 6 (529 aa).

A BTB domain is found at 127–197 (ADVHFIVGPA…LYSDEIDLEA (71 aa)).

In terms of assembly, homodimer and heterodimer. Interacts with cul3 via the BTB domain.

Its subcellular location is the cytoplasm. Its function is as follows. Adapter protein for the cul3 E3 ubiquitin-protein ligase complex. Involved in late neuronal development and muscle formation. The chain is BTB/POZ domain-containing protein 6 (btbd6) from Xenopus laevis (African clawed frog).